The sequence spans 275 residues: Light-independent protochlorophyllide reductase iron-sulfur ATP-binding protein (275 aa).

ATP is bound by residues 12-17 and K41; that span reads GIGKST. S16 provides a ligand contact to Mg(2+). Residues C97 and C131 each contribute to the [4Fe-4S] cluster site. 182–183 contacts ATP; that stretch reads NR.

Belongs to the NifH/BchL/ChlL family. As to quaternary structure, homodimer. Protochlorophyllide reductase is composed of three subunits; BchL, BchN and BchB. [4Fe-4S] cluster is required as a cofactor.

The enzyme catalyses chlorophyllide a + oxidized 2[4Fe-4S]-[ferredoxin] + 2 ADP + 2 phosphate = protochlorophyllide a + reduced 2[4Fe-4S]-[ferredoxin] + 2 ATP + 2 H2O. It functions in the pathway porphyrin-containing compound metabolism; bacteriochlorophyll biosynthesis (light-independent). Functionally, component of the dark-operative protochlorophyllide reductase (DPOR) that uses Mg-ATP and reduced ferredoxin to reduce ring D of protochlorophyllide (Pchlide) to form chlorophyllide a (Chlide). This reaction is light-independent. The L component serves as a unique electron donor to the NB-component of the complex, and binds Mg-ATP. The sequence is that of Light-independent protochlorophyllide reductase iron-sulfur ATP-binding protein from Chlorobium limicola (strain DSM 245 / NBRC 103803 / 6330).